The primary structure comprises 1140 residues: Protein FAM184A (1140 aa).

Coiled-coil stretches lie at residues 57 to 256, 296 to 800, and 868 to 907; these read ALNT…NKAQ, AILR…IEME, and RITD…LEFK. Residues 1063-1128 form a disordered region; the sequence is PNLSALESGG…EASPVASPDP (66 aa).

This sequence belongs to the FAM184 family.

The protein resides in the cytoplasm. It is found in the P-body. It localises to the cytoskeleton. Its subcellular location is the microtubule organizing center. The protein localises to the centrosome. The protein resides in the centriolar satellite. This Homo sapiens (Human) protein is Protein FAM184A.